The chain runs to 154 residues: Ribosomal RNA large subunit methyltransferase H (154 aa).

Residues glycine 103 and 122–127 (FSKLTF) contribute to the S-adenosyl-L-methionine site.

This sequence belongs to the RNA methyltransferase RlmH family. Homodimer.

The protein localises to the cytoplasm. The catalysed reaction is pseudouridine(1915) in 23S rRNA + S-adenosyl-L-methionine = N(3)-methylpseudouridine(1915) in 23S rRNA + S-adenosyl-L-homocysteine + H(+). Specifically methylates the pseudouridine at position 1915 (m3Psi1915) in 23S rRNA. The polypeptide is Ribosomal RNA large subunit methyltransferase H (Caldicellulosiruptor bescii (strain ATCC BAA-1888 / DSM 6725 / KCTC 15123 / Z-1320) (Anaerocellum thermophilum)).